The primary structure comprises 66 residues: Large ribosomal subunit protein bL35 (66 aa).

A compositionally biased stretch (basic residues) spans 1–26; sequence MPKMKTHRGSAKRFKKTGSGKLKRSH. Residues 1-48 are disordered; the sequence is MPKMKTHRGSAKRFKKTGSGKLKRSHAYTSHLFANKSQKQKRKLRKSA.

The protein belongs to the bacterial ribosomal protein bL35 family.

This chain is Large ribosomal subunit protein bL35, found in Bacillus licheniformis (strain ATCC 14580 / DSM 13 / JCM 2505 / CCUG 7422 / NBRC 12200 / NCIMB 9375 / NCTC 10341 / NRRL NRS-1264 / Gibson 46).